Consider the following 402-residue polypeptide: Phosphoglycerate kinase (402 aa).

Substrate-binding positions include 29-31 (DFN), Arg-45, 69-72 (HLGR), Arg-125, and Arg-158. Residues Lys-209, Glu-331, and 357 to 360 (GGDT) contribute to the ATP site.

It belongs to the phosphoglycerate kinase family.

It localises to the cytoplasm. The catalysed reaction is (2R)-3-phosphoglycerate + ATP = (2R)-3-phospho-glyceroyl phosphate + ADP. It functions in the pathway carbohydrate degradation; glycolysis; pyruvate from D-glyceraldehyde 3-phosphate: step 2/5. This is Phosphoglycerate kinase (pgk) from Helicobacter pylori (strain ATCC 700392 / 26695) (Campylobacter pylori).